Reading from the N-terminus, the 243-residue chain is Uridylate kinase (243 aa).

18 to 21 contributes to the ATP binding site; sequence KLGG. Gly-59 is a binding site for UMP. ATP is bound by residues Gly-60 and Arg-64. UMP is bound by residues Asp-79 and 140–147; that span reads MGMPYFST. The ATP site is built by Tyr-173 and Asp-176.

This sequence belongs to the UMP kinase family. As to quaternary structure, homohexamer.

The protein localises to the cytoplasm. It catalyses the reaction UMP + ATP = UDP + ADP. Its pathway is pyrimidine metabolism; CTP biosynthesis via de novo pathway; UDP from UMP (UMPK route): step 1/1. With respect to regulation, inhibited by UTP. Catalyzes the reversible phosphorylation of UMP to UDP. The chain is Uridylate kinase from Corynebacterium glutamicum (strain R).